Reading from the N-terminus, the 290-residue chain is 4-hydroxy-tetrahydrodipicolinate synthase (290 aa).

Residue T44 coordinates pyruvate. The active-site Proton donor/acceptor is the Y132. The active-site Schiff-base intermediate with substrate is K160. I202 contributes to the pyruvate binding site.

The protein belongs to the DapA family. As to quaternary structure, homotetramer; dimer of dimers.

The protein localises to the cytoplasm. The enzyme catalyses L-aspartate 4-semialdehyde + pyruvate = (2S,4S)-4-hydroxy-2,3,4,5-tetrahydrodipicolinate + H2O + H(+). It participates in amino-acid biosynthesis; L-lysine biosynthesis via DAP pathway; (S)-tetrahydrodipicolinate from L-aspartate: step 3/4. Functionally, catalyzes the condensation of (S)-aspartate-beta-semialdehyde [(S)-ASA] and pyruvate to 4-hydroxy-tetrahydrodipicolinate (HTPA). The protein is 4-hydroxy-tetrahydrodipicolinate synthase of Trichlorobacter lovleyi (strain ATCC BAA-1151 / DSM 17278 / SZ) (Geobacter lovleyi).